A 427-amino-acid chain; its full sequence is Tyrosine--tRNA ligase (427 aa).

An L-tyrosine-binding site is contributed by Tyr33. Positions 38–47 (PTASSLTIGN) match the 'HIGH' region motif. The L-tyrosine site is built by Tyr168 and Gln172. Residues 228–232 (KFGKS) carry the 'KMSKS' region motif. Lys231 lines the ATP pocket. An S4 RNA-binding domain is found at 361–427 (LDLLSTLTNS…KKNYYLLRFN (67 aa)).

The protein belongs to the class-I aminoacyl-tRNA synthetase family. TyrS type 1 subfamily. In terms of assembly, homodimer.

The protein resides in the cytoplasm. It carries out the reaction tRNA(Tyr) + L-tyrosine + ATP = L-tyrosyl-tRNA(Tyr) + AMP + diphosphate + H(+). Functionally, catalyzes the attachment of tyrosine to tRNA(Tyr) in a two-step reaction: tyrosine is first activated by ATP to form Tyr-AMP and then transferred to the acceptor end of tRNA(Tyr). This Cytophaga hutchinsonii (strain ATCC 33406 / DSM 1761 / CIP 103989 / NBRC 15051 / NCIMB 9469 / D465) protein is Tyrosine--tRNA ligase.